The following is a 277-amino-acid chain: Ribosomal RNA small subunit methyltransferase A (277 aa).

Residues N24, L26, G51, E72, D96, and N123 each coordinate S-adenosyl-L-methionine.

This sequence belongs to the class I-like SAM-binding methyltransferase superfamily. rRNA adenine N(6)-methyltransferase family. RsmA subfamily.

Its subcellular location is the cytoplasm. It carries out the reaction adenosine(1518)/adenosine(1519) in 16S rRNA + 4 S-adenosyl-L-methionine = N(6)-dimethyladenosine(1518)/N(6)-dimethyladenosine(1519) in 16S rRNA + 4 S-adenosyl-L-homocysteine + 4 H(+). Its function is as follows. Specifically dimethylates two adjacent adenosines (A1518 and A1519) in the loop of a conserved hairpin near the 3'-end of 16S rRNA in the 30S particle. May play a critical role in biogenesis of 30S subunits. This chain is Ribosomal RNA small subunit methyltransferase A, found in Ureaplasma parvum serovar 3 (strain ATCC 27815 / 27 / NCTC 11736).